Consider the following 395-residue polypeptide: Elongation factor Tu (395 aa).

The tr-type G domain occupies 10 to 204 (KTHANIGTIG…AVDSYIPTPE (195 aa)). The segment at 19-26 (GHVDHGKT) is G1. 19–26 (GHVDHGKT) contributes to the GTP binding site. Threonine 26 provides a ligand contact to Mg(2+). Positions 60-64 (GITIN) are G2. The G3 stretch occupies residues 81-84 (DCPG). GTP is bound by residues 81-85 (DCPGH) and 136-139 (NKCD). The segment at 136–139 (NKCD) is G4. Residues 174–176 (SAL) form a G5 region.

It belongs to the TRAFAC class translation factor GTPase superfamily. Classic translation factor GTPase family. EF-Tu/EF-1A subfamily. In terms of assembly, monomer.

Its subcellular location is the cytoplasm. It carries out the reaction GTP + H2O = GDP + phosphate + H(+). In terms of biological role, GTP hydrolase that promotes the GTP-dependent binding of aminoacyl-tRNA to the A-site of ribosomes during protein biosynthesis. This is Elongation factor Tu from Lysinibacillus sphaericus (strain C3-41).